We begin with the raw amino-acid sequence, 1219 residues long: Polyamine-transporting ATPase 13A3 (1219 aa).

Residues 1–28 (MDKEERKTINKGQEDEMEIHGYNLCRWK) lie on the Cytoplasmic side of the membrane. Residues 29–49 (LAMVFVGVICTGGFLLLLLYW) lie within the membrane without spanning it. Residues 50–201 (LPEWRVKATC…IAVKVPSVFK (152 aa)) are Cytoplasmic-facing. A helical membrane pass occupies residues 202 to 222 (LLIKEVLNPFYIFQLFSVILW). The Lumenal segment spans residues 223-228 (SVDEYY). A helical membrane pass occupies residues 229-249 (YYALAIVIMSVVSIISSLYSI). Over 250 to 405 (RKQYVMLHDM…KPTDFKLYRD (156 aa)) the chain is Cytoplasmic. A helical transmembrane segment spans residues 406–426 (AYLFLLCLVVVAGIGFIYTII). The Lumenal portion of the chain corresponds to 427–444 (NSILNEKEVQEIIIKSLD). A helical transmembrane segment spans residues 445–465 (IITITVPPALPAAMTAGIVYA). Residues 466–936 (QRRLKKVGIF…ALMTSFCVFK (471 aa)) are Cytoplasmic-facing. The active-site 4-aspartylphosphate intermediate is aspartate 494. Mg(2+)-binding residues include aspartate 494 and threonine 496. ATP contacts are provided by residues 494 to 496 (DKT), phenylalanine 624, arginine 680, and aspartate 746. Serine 813 bears the Phosphoserine mark. Mg(2+) contacts are provided by aspartate 879 and aspartate 883. ATP is bound at residue 879 to 883 (DGAND). The helical transmembrane segment at 937-957 (FMALYSIIQYFSVTLLYSILS) threads the bilayer. Asparagine 958 is a topological domain (lumenal). A helical transmembrane segment spans residues 959–979 (LGDFQFLFIDLAIILVVVFTM). Residues 980 to 995 (SLNPAWKELVAQRPPS) lie on the Cytoplasmic side of the membrane. Residues 996-1016 (GLISGALLFSVLSQIVISVGF) traverse the membrane as a helical segment. The Lumenal segment spans residues 1017–1066 (QSLGFFWVKQYKVCDPNSDVCNTTRSACWNSSHLYNGTELDSCKIQNYEN). Residues 1067-1087 (TTVFFISSFQYLTVAVAFSKG) form a helical membrane-spanning segment. Topologically, residues 1088–1098 (KPFRQPCYKNY) are cytoplasmic. A helical membrane pass occupies residues 1099–1119 (FFVISVIILYVFILFIMLHPV). Over 1120–1136 (ASVDQVLEIMCVPYQWR) the chain is Lumenal. The chain crosses the membrane as a helical span at residues 1137 to 1157 (IYMLIIVLINAFVSITVEESV). The Cytoplasmic portion of the chain corresponds to 1158 to 1219 (DRWGKCCLSW…NGSCQIITIA (62 aa)).

This sequence belongs to the cation transport ATPase (P-type) (TC 3.A.3) family. Type V subfamily. As to expression, expression is greatest in liver, followed by kidney, colon, stomach, brain and small intestine. Isoform 1 is highly expressed in the kidney while isoform 2 is highly expressed in the brain.

It is found in the recycling endosome membrane. The protein localises to the early endosome membrane. It localises to the late endosome membrane. It catalyses the reaction putrescine(out) + ATP + H2O = putrescine(in) + ADP + phosphate + H(+). Its function is as follows. ATP-driven pump involved in endocytosis-dependent polyamine transport. Uses ATP as an energy source to transfer polyamine precursor putrescine from the endosomal compartment to the cytosol. The polypeptide is Polyamine-transporting ATPase 13A3 (Mus musculus (Mouse)).